The chain runs to 83 residues: uncharacterized protein (83 aa).

This is an uncharacterized protein from Treponema pallidum (strain Nichols).